The chain runs to 631 residues: UvrABC system protein C (631 aa).

The interval M1–P20 is disordered. Residues M34 to V112 form the GIY-YIG domain. The region spanning T222–V257 is the UVR domain.

Belongs to the UvrC family. Interacts with UvrB in an incision complex.

The protein resides in the cytoplasm. Its function is as follows. The UvrABC repair system catalyzes the recognition and processing of DNA lesions. UvrC both incises the 5' and 3' sides of the lesion. The N-terminal half is responsible for the 3' incision and the C-terminal half is responsible for the 5' incision. In Jannaschia sp. (strain CCS1), this protein is UvrABC system protein C.